The sequence spans 436 residues: Protein GOLM2 (436 aa).

Met1 is modified (N-acetylmethionine). The Cytoplasmic portion of the chain corresponds to 1–14 (MVGFGANRRAGRLP). Residues 15 to 35 (SLVLVVLLVVIVVLAFNYWSI) form a helical; Signal-anchor for type II membrane protein membrane-spanning segment. Residues 35-195 (ISSRHVLLQE…QFLQEQKQEA (161 aa)) are a coiled coil. Over 36–436 (SSRHVLLQEE…YGKQHFNDVL (401 aa)) the chain is Lumenal. Basic and acidic residues-rich tracts occupy residues 193–207 (QEAHKIQSNDGKELD) and 224–247 (VADKNEEPSSNHIPHGKEQIKRGG). The segment at 193–436 (QEAHKIQSND…YGKQHFNDVL (244 aa)) is disordered. Ser233 and Ser275 each carry phosphoserine. Composition is skewed to polar residues over residues 275–295 (SVSQHESHQTISHIPTGQPLS) and 305–321 (NHNGNPGTSKQNPSSPL). Ser328 and Ser332 each carry phosphoserine. Basic and acidic residues predominate over residues 344–362 (ATKDRVSDFHKLKQSRFFD). The residue at position 366 (Ser366) is a Phosphoserine. Positions 399–418 (YNEEEDGDGGEEDVQDDEER) are enriched in acidic residues. A compositionally biased stretch (basic and acidic residues) spans 426-436 (DYGKQHFNDVL).

It belongs to the GOLM family.

It localises to the membrane. The protein is Protein GOLM2 (GOLM2) of Pongo abelii (Sumatran orangutan).